Consider the following 366-residue polypeptide: Chorismate synthase (366 aa).

NADP(+)-binding residues include Arg-48 and Arg-54. FMN contacts are provided by residues 131–133 (RAS), 243–244 (NA), Gly-288, 303–307 (KPTPS), and Arg-329.

It belongs to the chorismate synthase family. Homotetramer. It depends on FMNH2 as a cofactor.

It carries out the reaction 5-O-(1-carboxyvinyl)-3-phosphoshikimate = chorismate + phosphate. The protein operates within metabolic intermediate biosynthesis; chorismate biosynthesis; chorismate from D-erythrose 4-phosphate and phosphoenolpyruvate: step 7/7. In terms of biological role, catalyzes the anti-1,4-elimination of the C-3 phosphate and the C-6 proR hydrogen from 5-enolpyruvylshikimate-3-phosphate (EPSP) to yield chorismate, which is the branch point compound that serves as the starting substrate for the three terminal pathways of aromatic amino acid biosynthesis. This reaction introduces a second double bond into the aromatic ring system. The polypeptide is Chorismate synthase (Bartonella quintana (strain Toulouse) (Rochalimaea quintana)).